The chain runs to 128 residues: Sulfurtransferase TusD (128 aa).

Cysteine 78 functions as the Cysteine persulfide intermediate in the catalytic mechanism.

This sequence belongs to the DsrE/TusD family. In terms of assembly, heterohexamer, formed by a dimer of trimers. The hexameric TusBCD complex contains 2 copies each of TusB, TusC and TusD. The TusBCD complex interacts with TusE.

It localises to the cytoplasm. Part of a sulfur-relay system required for 2-thiolation of 5-methylaminomethyl-2-thiouridine (mnm(5)s(2)U) at tRNA wobble positions. Accepts sulfur from TusA and transfers it in turn to TusE. This is Sulfurtransferase TusD from Buchnera aphidicola subsp. Schizaphis graminum (strain Sg).